A 1820-amino-acid polypeptide reads, in one-letter code: Afadin (1820 aa).

The Ras-associating 1 domain maps to 39 to 133; that stretch reads FHGVMRFYFQ…GRFVLKNEND (95 aa). The segment at 129-196 is disordered; sequence KNENDAIPAK…PSQGDDSENS (68 aa). Residues 146–186 are a coiled coil; it reads EKQEKEGVIQNFKRTLSKKEKKEKKKKEKEALRQASDKEER. The span at 160–172 shows a compositional bias: basic residues; that stretch reads TLSKKEKKEKKKK. The span at 173 to 189 shows a compositional bias: basic and acidic residues; that stretch reads EKEALRQASDKEERPSQ. Phosphoserine occurs at positions 216, 246, and 256. Residues 246–348 form the Ras-associating 2 domain; sequence SGGTLRIYAD…LVFQLKRRPP (103 aa). A compositionally biased stretch (basic and acidic residues) spans 356-371; it reads KKHVEGKSLKGKDRAD. A disordered region spans residues 356–377; it reads KKHVEGKSLKGKDRADGSGYGS. Phosphoserine occurs at positions 391 and 424. In terms of domain architecture, FHA spans 426 to 492; that stretch reads TEVGTEKFDD…LQSGMRLQFG (67 aa). Ser-512, Ser-557, Ser-562, Ser-655, Ser-1083, Ser-1107, Ser-1126, Ser-1140, Ser-1143, Ser-1172, Ser-1173, Ser-1182, and Ser-1199 each carry phosphoserine. A disordered region spans residues 538-569; it reads GDVHSGTALPASRSTTRLDSDRVSSASSTAER. The Dilute domain occupies 653-908; the sequence is DISPTERTHK…IENVVAVAEN (256 aa). The 87-residue stretch at 1007-1093 folds into the PDZ domain; it reads IITVTLKKQN…VVTLEVAKQG (87 aa). The disordered stretch occupies residues 1107-1194; sequence SPMMQRISDR…GKGPYTSGTA (88 aa). Residues 1113 to 1128 show a composition bias toward basic and acidic residues; the sequence is ISDRRGSGKPRPKSEG. Over residues 1132 to 1143 the composition is skewed to polar residues; the sequence is YNNSAQNGSPES. Positions 1152–1172 are enriched in basic and acidic residues; it reads SEPKKLPGDDRLMKNRADHRS. The disordered stretch occupies residues 1203–1222; sequence GNLCTEEQSPPPRPEAYPIP. Thr-1232 is modified (phosphothreonine). Disordered regions lie at residues 1235-1278, 1308-1527, and 1567-1716; these read ASKS…SQEE, QSSS…KQQQ, and RLQE…LKTQ. Phosphoserine is present on Ser-1238. The span at 1252-1262 shows a compositional bias: basic and acidic residues; the sequence is YEEKPHVHTES. Residue Ser-1275 is modified to Phosphoserine. The span at 1309–1318 shows a compositional bias: low complexity; sequence SSSVESSTSS. Residues 1325–1337 show a composition bias toward polar residues; the sequence is SSKSVTPASTLTK. Position 1328 is a phosphoserine (Ser-1328). The residue at position 1330 (Thr-1330) is a Phosphothreonine. Pro residues predominate over residues 1364-1373; sequence LPPPPPPPPV. Residues 1407–1440 show a composition bias toward basic and acidic residues; that stretch reads EWKKREEHQRWYEKEKARLEEERERKRREQERKL. Positions 1410-1446 form a coiled coil; sequence KREEHQRWYEKEKARLEEERERKRREQERKLGQMRSQ. Residues 1443–1457 show a composition bias toward polar residues; it reads MRSQTLNPASFSPLA. Residues 1487–1503 are compositionally biased toward basic and acidic residues; sequence TIERKDLQYITISKEEL. Phosphoserine is present on residues Ser-1499 and Ser-1510. Residues 1513–1526 are compositionally biased toward basic and acidic residues; that stretch reads PWKRDAREKLEKQQ. Residues 1523–1561 are a coiled coil; that stretch reads EKQQQMHIVDMLSKEIHELQNKVDRTAEESDRLRKLMLE. Positions 1576–1587 are enriched in acidic residues; the sequence is EDDDEEEDDDVD. A coiled-coil region spans residues 1593-1665; the sequence is QRLEAERRAR…SRLEAERRRQ (73 aa). Positions 1595 to 1675 are enriched in basic and acidic residues; sequence LEAERRARMQ…HEEAARRLLE (81 aa). Phosphoserine is present on residues Ser-1694, Ser-1719, Ser-1770, and Ser-1795. A disordered region spans residues 1734–1820; the sequence is EEEDYGPAGP…TELENELNTK (87 aa). Residues 1759–1772 are compositionally biased toward basic and acidic residues; it reads APREAREKLTRSQD. Residues 1800-1820 show a composition bias toward basic and acidic residues; that stretch reads VSDKVKASRKLTELENELNTK. Lys-1803 carries the post-translational modification N6-acetyllysine.

In terms of assembly, homodimer. Interacts with F-actin, nectin and NECTIN3. Essential for the association of nectin and E-cadherin. Isoform 2/s-afadin does not interact with F-actin. Interacts with ZO-1 and occludin, but probably in an indirect manner. Interacts with RIT1, RIT2, NRXN1 and BCR. Interacts with ADAM10; the interaction locks ADAM10 at adherens junctions following ADAM10 recruitment to adherens junctions by TSPAN33. In terms of tissue distribution, isoform 1 is expressed only in a restricted set of epithelial structures during early embryogenesis.

Its subcellular location is the cell junction. The protein resides in the adherens junction. Its function is as follows. Belongs to an adhesion system, probably together with the E-cadherin-catenin system, which plays a role in the organization of homotypic, interneuronal and heterotypic cell-cell adherens junctions (AJs). Nectin- and actin-filament-binding protein that connects nectin to the actin cytoskeleton. May play a key role in the organization of epithelial structures of the embryonic ectoderm. Essential for the organization of adherens junctions. This chain is Afadin, found in Mus musculus (Mouse).